Consider the following 612-residue polypeptide: Probable cytosolic Fe-S cluster assembly factor SJAG_02895 (612 aa).

13–20 (GKGGVGKS) is a binding site for ATP. 2 residues coordinate [4Fe-4S] cluster: cysteine 200 and cysteine 203. WD repeat units lie at residues 287–326 (GHRGRIWSVAVHPTLPLVATASEDKSVRVFQAQTGELIHV), 330–370 (YHTR…WECV), 375–414 (GHENEVKCVAWSHDGVYLATCSRDKSVWIWEAMEDDEFDC), 420–459 (EHTQDVKVVAWHPKDDLLVSGSYDNTIRFWRDDGDDWVQT), 464–503 (SHTSTVWALNFSPDGRLLASGDGEGEVFIWEKLVSNEDAA), 528–566 (TFTEPVYTLGWKDDHTLCASGAEGTIGLFAYEDDVSTWH), and 574–612 (AHDVYEINTIAWTNDSRLLSGGDDGLCNVWKLSEADQTA).

It in the N-terminal section; belongs to the Mrp/NBP35 ATP-binding proteins family. NUBP2/CFD1 subfamily. This sequence in the C-terminal section; belongs to the WD repeat CIA1 family. Heterotetramer of 2 nbp35 and 2 SJAG_02895 chains. Requires [4Fe-4S] cluster as cofactor.

It localises to the cytoplasm. The protein resides in the nucleus. Functionally, fusion protein of two essential components of the cytosolic iron-sulfur (Fe/S) protein assembly (CIA) machinery. Required for maturation of extramitochondrial Fe-S proteins. May form a heterotetramer with nubp35, functioning as a Fe-S scaffold complex, mediating the de novo assembly of an Fe-S cluster and its transfer to target apoproteins. The sequence is that of Probable cytosolic Fe-S cluster assembly factor SJAG_02895 from Schizosaccharomyces japonicus (strain yFS275 / FY16936) (Fission yeast).